A 263-amino-acid polypeptide reads, in one-letter code: (R)-S-adenosyl-L-methionine hydrolase (263 aa).

Adenosine contacts are provided by D18, D82, and N181. (R)-S-adenosyl-L-methionine is bound by residues N181, Y221, S234, E239, and M244.

Belongs to the SAM hydrolase / SAM-dependent halogenase family. As to quaternary structure, homotrimer.

The catalysed reaction is (R)-S-adenosyl-L-methionine + H2O = adenosine + L-methionine + H(+). Functionally, catalyzes the hydrolysis of S-adenosyl-L-methionine (SAM) into adenosine and L-methionine. Does not have chlorinase or fluorinase activity. This chain is (R)-S-adenosyl-L-methionine hydrolase, found in Methanocaldococcus jannaschii (strain ATCC 43067 / DSM 2661 / JAL-1 / JCM 10045 / NBRC 100440) (Methanococcus jannaschii).